Reading from the N-terminus, the 132-residue chain is Small ribosomal subunit protein uS8c (132 aa).

The protein belongs to the universal ribosomal protein uS8 family. Part of the 30S ribosomal subunit.

The protein localises to the plastid. The protein resides in the chloroplast. Functionally, one of the primary rRNA binding proteins, it binds directly to 16S rRNA central domain where it helps coordinate assembly of the platform of the 30S subunit. The chain is Small ribosomal subunit protein uS8c (rps8) from Liriodendron tulipifera (Tuliptree).